A 201-amino-acid chain; its full sequence is Large ribosomal subunit protein mL61 (201 aa).

Residues 87-118 (RDDKDAKPSSTPFPTSSADGSSPAPKPAQGER) are disordered. A compositionally biased stretch (polar residues) spans 94 to 106 (PSSTPFPTSSADG).

The protein belongs to the mitochondrion-specific ribosomal protein mL61 family. As to quaternary structure, component of the mitochondrial large ribosomal subunit (mt-LSU). Mature N.crassa 74S mitochondrial ribosomes consist of a small (37S) and a large (54S) subunit. The 37S small subunit contains a 16S ribosomal RNA (16S mt-rRNA) and 32 different proteins. The 54S large subunit contains a 23S rRNA (23S mt-rRNA) and 42 different proteins.

Its subcellular location is the mitochondrion. Its function is as follows. Component of the mitochondrial ribosome (mitoribosome), a dedicated translation machinery responsible for the synthesis of mitochondrial genome-encoded proteins, including at least some of the essential transmembrane subunits of the mitochondrial respiratory chain. The mitoribosomes are attached to the mitochondrial inner membrane and translation products are cotranslationally integrated into the membrane. The chain is Large ribosomal subunit protein mL61 (mrp49) from Neurospora crassa (strain ATCC 24698 / 74-OR23-1A / CBS 708.71 / DSM 1257 / FGSC 987).